The sequence spans 53 residues: Sec-independent protein translocase protein TatA (53 aa).

Residues 1-21 (MGMSLSHLLIVLLIIFVLFGA) traverse the membrane as a helical segment.

Belongs to the TatA/E family. As to quaternary structure, the Tat system comprises two distinct complexes: a TatABC complex, containing multiple copies of TatA, TatB and TatC subunits, and a separate TatA complex, containing only TatA subunits. Substrates initially bind to the TatABC complex, which probably triggers association of the separate TatA complex to form the active translocon.

Its subcellular location is the cell inner membrane. In terms of biological role, part of the twin-arginine translocation (Tat) system that transports large folded proteins containing a characteristic twin-arginine motif in their signal peptide across membranes. TatA could form the protein-conducting channel of the Tat system. This Rickettsia conorii (strain ATCC VR-613 / Malish 7) protein is Sec-independent protein translocase protein TatA.